A 2104-amino-acid chain; its full sequence is 5'-3' DNA helicase ZGRF1 (2104 aa).

The span at 335–345 (SSPIHSSTVDG) shows a compositional bias: polar residues. The interval 335-359 (SSPIHSSTVDGNDTERKPKAQEDDV) is disordered. Ser-336 bears the Phosphoserine mark. Positions 347-356 (DTERKPKAQE) are enriched in basic and acidic residues. Phosphoserine is present on residues Ser-793 and Ser-864. 4 residues coordinate Zn(2+): Cys-1349, His-1351, Cys-1374, and Cys-1382. The GRF-type zinc finger occupies 1349–1391 (CHHSQPAKLVMVKKEGPNKGRLFYTCDGPKADRCKFFKWLEDV). Residues 2085 to 2104 (VEEKQKKKSEKEKSKDKSHS) form a disordered region.

Interacts with DNA repair protein RAD51; the interaction promotes RAD51 strand exchange activity. Also interacts with DNA repair proteins EXO1 and BRCA1; the interactions are increased following DNA damage induction.

The protein localises to the nucleus. The catalysed reaction is ATP + H2O = ADP + phosphate + H(+). It catalyses the reaction Couples ATP hydrolysis with the unwinding of duplex DNA at the replication fork by translocating in the 5'-3' direction. This creates two antiparallel DNA single strands (ssDNA). The leading ssDNA polymer is the template for DNA polymerase III holoenzyme which synthesizes a continuous strand.. Its function is as follows. 5'-3' DNA helicase which is recruited to sites of DNA damage and promotes repair of replication-blocking DNA lesions through stimulation of homologous recombination (HR). Promotes HR by directly stimulating RAD51-mediated strand exchange activity. Not required to load RAD51 at sites of DNA damage but promotes recombinational repair after RAD51 recruitment. Also promotes HR by positively regulating EXO1-mediated DNA end resection of double-strand breaks. Required for recruitment of replication protein RPA2 to DNA damage sites. Promotes the initiation of the G2/M checkpoint but not its maintenance. Catalyzes Holliday junction branch migration and dissociation of D-loops and DNA flaps. This Homo sapiens (Human) protein is 5'-3' DNA helicase ZGRF1 (ZGRF1).